The following is a 1237-amino-acid chain: Clustered mitochondria protein homolog (1237 aa).

Positions 291–535 (DITRSQENCL…RITPLDVAWS (245 aa)) constitute a Clu domain. 2 stretches are compositionally biased toward basic and acidic residues: residues 575–597 (RKTA…DKAE) and 845–854 (SQIKSQEHSP). Disordered stretches follow at residues 575-614 (RKTA…AVAS) and 845-886 (SQIK…VAAS). TPR repeat units lie at residues 957–990 (AKLY…TERT), 999–1032 (ILSY…WKII), and 1041–1074 (ITTM…CEGL). Disordered stretches follow at residues 1152–1189 (RLRR…KSIG) and 1201–1237 (FIEG…VQTA). Residues 1156–1187 (TNLSPRMTIGTKPQPQVGQNAPATTNGATSKS) show a composition bias toward polar residues.

This sequence belongs to the CLU family. May associate with the eukaryotic translation initiation factor 3 (eIF-3) complex.

It localises to the cytoplasm. Its function is as follows. mRNA-binding protein involved in proper cytoplasmic distribution of mitochondria. The polypeptide is Clustered mitochondria protein homolog (Ajellomyces capsulatus (strain NAm1 / WU24) (Darling's disease fungus)).